The chain runs to 122 residues: Large ribosomal subunit protein uL14c (122 aa).

The protein belongs to the universal ribosomal protein uL14 family. Part of the 50S ribosomal subunit.

The protein resides in the plastid. Its subcellular location is the chloroplast. Binds to 23S rRNA. This Staurastrum punctulatum (Green alga) protein is Large ribosomal subunit protein uL14c.